The sequence spans 303 residues: Putative HTH-type transcriptional regulatory protein Mpal_0031 (303 aa).

Residues 132-189 (LRGLREQRNMSLGDLGAVLGVSRRTISKYESGMGTTLEIAIKIEEVFDSGVIESIDLL) enclose the HTH cro/C1-type domain. Positions 143–162 (LGDLGAVLGVSRRTISKYES) form a DNA-binding region, H-T-H motif.

The sequence is that of Putative HTH-type transcriptional regulatory protein Mpal_0031 from Methanosphaerula palustris (strain ATCC BAA-1556 / DSM 19958 / E1-9c).